We begin with the raw amino-acid sequence, 119 residues long: Large ribosomal subunit protein uL24 (119 aa).

It belongs to the universal ribosomal protein uL24 family. In terms of assembly, part of the 50S ribosomal subunit.

One of two assembly initiator proteins, it binds directly to the 5'-end of the 23S rRNA, where it nucleates assembly of the 50S subunit. In terms of biological role, one of the proteins that surrounds the polypeptide exit tunnel on the outside of the subunit. The sequence is that of Large ribosomal subunit protein uL24 from Clavibacter sepedonicus (Clavibacter michiganensis subsp. sepedonicus).